Consider the following 775-residue polypeptide: DNA polymerase (775 aa).

This sequence belongs to the DNA polymerase type-B family.

The enzyme catalyses DNA(n) + a 2'-deoxyribonucleoside 5'-triphosphate = DNA(n+1) + diphosphate. The protein is DNA polymerase (pol) of Thermococcus sp. (strain 9oN-7).